The sequence spans 34 residues: Photosystem II reaction center protein T (34 aa).

Residues 3-23 (SVAYILIFTLTIGTLFFAVAF) form a helical membrane-spanning segment.

It belongs to the PsbT family. As to quaternary structure, PSII is composed of 1 copy each of membrane proteins PsbA, PsbB, PsbC, PsbD, PsbE, PsbF, PsbH, PsbI, PsbJ, PsbK, PsbL, PsbM, PsbT, PsbX, PsbY, PsbZ, Psb30/Ycf12, peripheral proteins PsbO, CyanoQ (PsbQ), PsbU, PsbV and a large number of cofactors. It forms dimeric complexes.

Its subcellular location is the cellular thylakoid membrane. In terms of biological role, found at the monomer-monomer interface of the photosystem II (PS II) dimer, plays a role in assembly and dimerization of PSII. PSII is a light-driven water plastoquinone oxidoreductase, using light energy to abstract electrons from H(2)O, generating a proton gradient subsequently used for ATP formation. This chain is Photosystem II reaction center protein T, found in Mastigocladus laminosus (Fischerella sp.).